We begin with the raw amino-acid sequence, 429 residues long: Saccharopine dehydrogenase-like oxidoreductase (429 aa).

Residue alanine 2 is modified to N-acetylalanine. Residue serine 217 is modified to Phosphoserine.

The protein belongs to the saccharopine dehydrogenase family.

This Pongo abelii (Sumatran orangutan) protein is Saccharopine dehydrogenase-like oxidoreductase (SCCPDH).